We begin with the raw amino-acid sequence, 259 residues long: Global transcriptional regulator CodY (259 aa).

The segment at 1–155 (MELLAKTRKL…SSTVVGMEIL (155 aa)) is GAF domain. The segment at residues 203–222 (ASKIADRVGITRSVIVNALR) is a DNA-binding region (H-T-H motif). Ser215 bears the Phosphoserine mark.

The protein belongs to the CodY family.

The protein resides in the cytoplasm. Functionally, DNA-binding global transcriptional regulator which is involved in the adaptive response to starvation and acts by directly or indirectly controlling the expression of numerous genes in response to nutrient availability. During rapid exponential growth, CodY is highly active and represses genes whose products allow adaptation to nutrient depletion. This chain is Global transcriptional regulator CodY, found in Bacillus anthracis (strain A0248).